A 355-amino-acid polypeptide reads, in one-letter code: tRNA-specific 2-thiouridylase MnmA (355 aa).

ATP contacts are provided by residues 8-15 (GMSGGVDS) and Met-34. The active-site Nucleophile is Cys-103. Cys-103 and Cys-199 form a disulfide bridge. Gly-127 is an ATP binding site. The segment at 149-151 (KDQ) is interaction with tRNA. The active-site Cysteine persulfide intermediate is the Cys-199. The interaction with tRNA stretch occupies residues 305-306 (RY).

It belongs to the MnmA/TRMU family.

Its subcellular location is the cytoplasm. It catalyses the reaction S-sulfanyl-L-cysteinyl-[protein] + uridine(34) in tRNA + AH2 + ATP = 2-thiouridine(34) in tRNA + L-cysteinyl-[protein] + A + AMP + diphosphate + H(+). Catalyzes the 2-thiolation of uridine at the wobble position (U34) of tRNA, leading to the formation of s(2)U34. The polypeptide is tRNA-specific 2-thiouridylase MnmA (Clostridium acetobutylicum (strain ATCC 824 / DSM 792 / JCM 1419 / IAM 19013 / LMG 5710 / NBRC 13948 / NRRL B-527 / VKM B-1787 / 2291 / W)).